We begin with the raw amino-acid sequence, 437 residues long: GTPase Obg (437 aa).

One can recognise an Obg domain in the interval 2–160 (SLFLDTARIE…KILLLELRVL (159 aa)). In terms of domain architecture, OBG-type G spans 161–338 (ADVGLVGFPS…LLARTSELLA (178 aa)). Residues 167–174 (GFPSVGKS), 192–196 (FTTIT), 214–217 (DMPG), 284–287 (NKMD), and 319–321 (SGL) each bind GTP. Residues S174 and T194 each coordinate Mg(2+). The region spanning 359-437 (GFEEEEKPFK…IQKFEFEFVD (79 aa)) is the OCT domain.

The protein belongs to the TRAFAC class OBG-HflX-like GTPase superfamily. OBG GTPase family. In terms of assembly, monomer. Mg(2+) is required as a cofactor.

It localises to the cytoplasm. Its function is as follows. An essential GTPase which binds GTP, GDP and possibly (p)ppGpp with moderate affinity, with high nucleotide exchange rates and a fairly low GTP hydrolysis rate. Plays a role in control of the cell cycle, stress response, ribosome biogenesis and in those bacteria that undergo differentiation, in morphogenesis control. The protein is GTPase Obg of Lactococcus lactis subsp. lactis (strain IL1403) (Streptococcus lactis).